Reading from the N-terminus, the 292-residue chain is N-acetylneuraminate lyase (292 aa).

Aceneuramate is bound by residues S47 and T48. The active-site Proton donor is the Y136. The active-site Schiff-base intermediate with substrate is K164. Residues T166, G188, D190, E191, and S207 each coordinate aceneuramate.

Belongs to the DapA family. NanA subfamily. In terms of assembly, homotetramer.

The protein localises to the cytoplasm. It catalyses the reaction aceneuramate = aldehydo-N-acetyl-D-mannosamine + pyruvate. Its pathway is amino-sugar metabolism; N-acetylneuraminate degradation; D-fructose 6-phosphate from N-acetylneuraminate: step 1/5. Its function is as follows. Catalyzes the reversible aldol cleavage of N-acetylneuraminic acid (sialic acid; Neu5Ac) to form pyruvate and N-acetylmannosamine (ManNAc) via a Schiff base intermediate. This is N-acetylneuraminate lyase from Histophilus somni (strain 129Pt) (Haemophilus somnus).